Reading from the N-terminus, the 394-residue chain is Elongation factor Tu (394 aa).

Residues 10 to 204 form the tr-type G domain; it reads KPHVNIGTIG…AVDSWIPLPE (195 aa). Positions 19–26 are G1; the sequence is GHVDHGKT. 19 to 26 contacts GTP; sequence GHVDHGKT. Residue threonine 26 coordinates Mg(2+). The tract at residues 60-64 is G2; it reads GITIN. The G3 stretch occupies residues 81 to 84; that stretch reads DCPG. Residues 81–85 and 136–139 each bind GTP; these read DCPGH and NKCD. A G4 region spans residues 136-139; that stretch reads NKCD. The G5 stretch occupies residues 174-176; sequence SGL.

The protein belongs to the TRAFAC class translation factor GTPase superfamily. Classic translation factor GTPase family. EF-Tu/EF-1A subfamily. As to quaternary structure, monomer.

Its subcellular location is the cytoplasm. The catalysed reaction is GTP + H2O = GDP + phosphate + H(+). Its function is as follows. GTP hydrolase that promotes the GTP-dependent binding of aminoacyl-tRNA to the A-site of ribosomes during protein biosynthesis. This Ureaplasma parvum serovar 3 (strain ATCC 27815 / 27 / NCTC 11736) protein is Elongation factor Tu.